Consider the following 290-residue polypeptide: Sodium/potassium-transporting ATPase subunit beta-2 (290 aa).

The Cytoplasmic portion of the chain corresponds to 1–39 (MVIQKEKKSCGQVVEEWKEFVWNPRTHQFMGRTGTSWAF). The chain crosses the membrane as a helical; Signal-anchor for type II membrane protein span at residues 40–67 (ILLFYLVFYGFLTAMFSLTMWVMLQTVS). The Extracellular segment spans residues 68 to 290 (DHTPKYQDRL…VAFKLRINKT (223 aa)). N-linked (GlcNAc...) asparagine glycosylation is found at N96 and N118. C129 and C150 form a disulfide bridge. N153 carries an N-linked (GlcNAc...) asparagine glycan. A disulfide bridge links C160 with C177. Residues N193, N197, N220, and N238 are each glycosylated (N-linked (GlcNAc...) asparagine). An immunoglobulin-like region spans residues 193–290 (NQSMNVTCVG…VAFKLRINKT (98 aa)). C200 and C261 are oxidised to a cystine.

This sequence belongs to the X(+)/potassium ATPases subunit beta family. The sodium/potassium-transporting ATPase is composed of a catalytic alpha subunit, an auxiliary non-catalytic beta subunit and an additional regulatory subunit. Interacts with isoform 2 of BSG.

It localises to the cell membrane. In terms of biological role, this is the non-catalytic component of the active enzyme, which catalyzes the hydrolysis of ATP coupled with the exchange of Na(+) and K(+) ions across the plasma membrane. The exact function of the beta-2 subunit is not known. Functionally, mediates cell adhesion of neurons and astrocytes, and promotes neurite outgrowth. The protein is Sodium/potassium-transporting ATPase subunit beta-2 (Atp1b2) of Mus musculus (Mouse).